The chain runs to 193 residues: Thymidine kinase (193 aa).

Residues 9-16 and 87-90 contribute to the ATP site; these read ASMNAGKS and DEAQ. Residue Glu88 is the Proton acceptor of the active site. Cys145, Cys147, Cys182, and His185 together coordinate Zn(2+).

This sequence belongs to the thymidine kinase family. Homotetramer.

It is found in the cytoplasm. The catalysed reaction is thymidine + ATP = dTMP + ADP + H(+). This Zymomonas mobilis subsp. mobilis (strain ATCC 31821 / ZM4 / CP4) protein is Thymidine kinase.